The chain runs to 439 residues: Probable E3 ubiquitin-protein ligase makorin-1 (439 aa).

3 consecutive C3H1-type zinc fingers follow at residues 18–45 (WTKHVTCRYFMHGLCKEGENCRYSHDLS), 48–74 (KQTMICKFFQKGCCAFGDRCRYEHTKP), and 163–190 (EMKKQLCPYAAVGECRYGLNCAYLHGDV). The tract at residues 73 to 118 (KPSKQDEVPSSKPSMPLTAAPLAGTPEPVSDGPGGTTGAQEKPQGS) is disordered. Residues 191–218 (CDMCGLQVLHPSDTSQRSQHIRACIEAH) are makorin-type Cys-His. The RING-type zinc-finger motif lies at 236-290 (CGVCMEVVFEKTNPSERRFGILSNCCHCYCLKCIRKWRSAKQFESKIIKSCPECR). The segment at 319–348 (GMGTKPCRYFDEGRGTCPFGANCFYKHAFP) adopts a C3H1-type 4 zinc-finger fold. The segment at 352-371 (LEEPQPQRRQNGSNGRNRNT) is disordered. A compositionally biased stretch (low complexity) spans 358–368 (QRRQNGSNGRN).

It carries out the reaction S-ubiquitinyl-[E2 ubiquitin-conjugating enzyme]-L-cysteine + [acceptor protein]-L-lysine = [E2 ubiquitin-conjugating enzyme]-L-cysteine + N(6)-ubiquitinyl-[acceptor protein]-L-lysine.. It participates in protein modification; protein ubiquitination. Its function is as follows. E3 ubiquitin ligase catalyzing the covalent attachment of ubiquitin moieties onto substrate proteins. The polypeptide is Probable E3 ubiquitin-protein ligase makorin-1 (Danio rerio (Zebrafish)).